Consider the following 309-residue polypeptide: 2-dehydropantoate 2-reductase (309 aa).

NADP(+)-binding positions include 7–12 (GAGSIG), arginine 31, and lysine 74. CoA-binding positions include 8-10 (AGS), arginine 31, lysine 74, and cysteine 84. The NADP(+) site is built by asparagine 100 and alanine 124. Catalysis depends on lysine 180, which acts as the Proton donor. Residues lysine 180, asparagine 184, asparagine 188, asparagine 198, and 247-250 (NYNS) contribute to the substrate site. Arginine 257 is a binding site for CoA. Glutamate 262 is a binding site for NADP(+).

This sequence belongs to the ketopantoate reductase family. Homodimer.

The protein resides in the cytoplasm. It catalyses the reaction (R)-pantoate + NAD(+) = 2-dehydropantoate + NADH + H(+). It carries out the reaction (R)-pantoate + NADP(+) = 2-dehydropantoate + NADPH + H(+). The protein operates within cofactor biosynthesis; coenzyme A biosynthesis. Its activity is regulated as follows. Regulated by feedback inhibition by coenzyme A (CoA). CoA acts by competing with NAD(P)H. A disulfide bond is formed between CoA and Cys-84, which indicates an irreversible inhibition upon binding of CoA. Catalyzes the NAD(P)H-dependent reduction of ketopantoate into pantoic acid. Prefers NADH rather than NADPH as the electron donor. The protein is 2-dehydropantoate 2-reductase of Thermococcus kodakarensis (strain ATCC BAA-918 / JCM 12380 / KOD1) (Pyrococcus kodakaraensis (strain KOD1)).